The sequence spans 142 residues: Hemoglobin subunit alpha (142 aa).

The 141-residue stretch at 2 to 142 (VLSPADKSNV…VSTVLTSKYR (141 aa)) folds into the Globin domain. Position 4 is a phosphoserine (S4). N6-succinyllysine is present on residues K8 and K12. K17 is subject to N6-acetyllysine; alternate. At K17 the chain carries N6-succinyllysine; alternate. The residue at position 25 (Y25) is a Phosphotyrosine. Position 36 is a phosphoserine (S36). An N6-succinyllysine modification is found at K41. S50 carries the post-translational modification Phosphoserine. H59 contributes to the O2 binding site. H88 contacts heme b. S103 is modified (phosphoserine). T109 is modified (phosphothreonine). 2 positions are modified to phosphoserine: S125 and S132. T135 and T138 each carry phosphothreonine. S139 carries the post-translational modification Phosphoserine.

This sequence belongs to the globin family. As to quaternary structure, heterotetramer of two alpha chains and two beta chains. As to expression, red blood cells.

In terms of biological role, involved in oxygen transport from the lung to the various peripheral tissues. Its function is as follows. Hemopressin acts as an antagonist peptide of the cannabinoid receptor CNR1. Hemopressin-binding efficiently blocks cannabinoid receptor CNR1 and subsequent signaling. The sequence is that of Hemoglobin subunit alpha (HBA) from Ateles geoffroyi (Black-handed spider monkey).